The following is a 478-amino-acid chain: MNIQKYGLSSDISIKLKTKVDKIKEKKEEVLKLNTSTFYGKAEVRLINDVSILDGINKSVVRYDTGKISEGLLHQEEMKRGVEKRPNCSETRKTHFHDNCVGLLYNILRLFYLIDINFDEYDAYATYFQDNALLVINVHLFGDQPFSSLENFVVQPVSVNVICKPELNETFNSNSNYLKVGNTIDEHFLKELVNGTQDIENIIVRLVKDNRLFTQFDIAYGMVAQVFMQLKPFLVEGTYWIAEPLLMNIPELKTQRGRYPSLLDGHLWKLTNSLKLLLKIASYTQKYLLSIEKYSEEREKKMLLNGEINESSGLLHDVVLAAELFNVKHASYYNVHAGLDRFQFLRKPLKSLVMFTDVVKERDGTCDFCGTYFEDSRMSTSYLCDENRKGENRKLEIRDLVPYLYPVLLRGVLSLPVFESRLKFAAKVPIYPKGPLYTTDTHTYNYLMNCFVPMNEEQVLSACYRFFAKSAENELFEA.

This is an uncharacterized protein from Schizosaccharomyces pombe (strain 972 / ATCC 24843) (Fission yeast).